The chain runs to 36 residues: Thrombin (36 aa).

The Peptidase S1 domain maps to 19–36 (IVKGIDAEVASAPMQVML).

Belongs to the peptidase S1 family. As to quaternary structure, forms a heterodimer with SERPINA5. The gamma-carboxyglutamyl residues, which bind calcium ions, result from the carboxylation of glutamyl residues by a microsomal enzyme, the vitamin K-dependent carboxylase. The modified residues are necessary for the calcium-dependent interaction with a negatively charged phospholipid surface, which is essential for the conversion of prothrombin to thrombin. Post-translationally, N-glycosylated. In terms of tissue distribution, expressed by the liver and secreted in plasma.

Its subcellular location is the secreted. It catalyses the reaction Selective cleavage of Arg-|-Gly bonds in fibrinogen to form fibrin and release fibrinopeptides A and B.. Its activity is regulated as follows. Inhibited by SERPINA5. In terms of biological role, thrombin, which cleaves bonds after Arg and Lys, converts fibrinogen to fibrin and activates factors V, VII, VIII, XIII, and, in complex with thrombomodulin, protein C. Functions in blood homeostasis, inflammation and wound healing. The chain is Thrombin from Salmo salar (Atlantic salmon).